Reading from the N-terminus, the 128-residue chain is DNA-directed RNA polymerase subunit omega (128 aa).

It belongs to the RNA polymerase subunit omega family. The RNAP catalytic core consists of 2 alpha, 1 beta, 1 beta' and 1 omega subunit. When a sigma factor is associated with the core the holoenzyme is formed, which can initiate transcription.

The catalysed reaction is RNA(n) + a ribonucleoside 5'-triphosphate = RNA(n+1) + diphosphate. In terms of biological role, promotes RNA polymerase assembly. Latches the N- and C-terminal regions of the beta' subunit thereby facilitating its interaction with the beta and alpha subunits. The polypeptide is DNA-directed RNA polymerase subunit omega (Azorhizobium caulinodans (strain ATCC 43989 / DSM 5975 / JCM 20966 / LMG 6465 / NBRC 14845 / NCIMB 13405 / ORS 571)).